We begin with the raw amino-acid sequence, 130 residues long: Cytochrome c-type biogenesis protein CcmE (130 aa).

The Cytoplasmic portion of the chain corresponds to 1–7 (MKKKHKR). Residues 8–28 (LLITSGIFCFLSCAVFFILTT) traverse the membrane as a helical; Signal-anchor for type II membrane protein segment. Topologically, residues 29–130 (LKENISFFYT…DENYMPKVLK (102 aa)) are extracellular. Residues H120 and Y124 each contribute to the heme site.

The protein belongs to the CcmE/CycJ family.

The protein resides in the cell membrane. Heme chaperone required for the biogenesis of c-type cytochromes. Transiently binds heme delivered by CcmC and transfers the heme to apo-cytochromes in a process facilitated by CcmF and CcmH. The protein is Cytochrome c-type biogenesis protein CcmE of Wolbachia pipientis wMel.